We begin with the raw amino-acid sequence, 95 residues long: Large ribosomal subunit protein bL25 (95 aa).

The protein belongs to the bacterial ribosomal protein bL25 family. As to quaternary structure, part of the 50S ribosomal subunit; part of the 5S rRNA/L5/L18/L25 subcomplex. Contacts the 5S rRNA. Binds to the 5S rRNA independently of L5 and L18.

In terms of biological role, this is one of the proteins that binds to the 5S RNA in the ribosome where it forms part of the central protuberance. This is Large ribosomal subunit protein bL25 from Shewanella pealeana (strain ATCC 700345 / ANG-SQ1).